The sequence spans 293 residues: Bifunctional protein FolD (293 aa).

NADP(+)-binding positions include 164–166, Ser193, and Thr234; that span reads GRS.

It belongs to the tetrahydrofolate dehydrogenase/cyclohydrolase family. As to quaternary structure, homodimer.

The catalysed reaction is (6R)-5,10-methylene-5,6,7,8-tetrahydrofolate + NADP(+) = (6R)-5,10-methenyltetrahydrofolate + NADPH. The enzyme catalyses (6R)-5,10-methenyltetrahydrofolate + H2O = (6R)-10-formyltetrahydrofolate + H(+). The protein operates within one-carbon metabolism; tetrahydrofolate interconversion. Functionally, catalyzes the oxidation of 5,10-methylenetetrahydrofolate to 5,10-methenyltetrahydrofolate and then the hydrolysis of 5,10-methenyltetrahydrofolate to 10-formyltetrahydrofolate. The polypeptide is Bifunctional protein FolD (Bacteroides fragilis (strain ATCC 25285 / DSM 2151 / CCUG 4856 / JCM 11019 / LMG 10263 / NCTC 9343 / Onslow / VPI 2553 / EN-2)).